The following is a 339-amino-acid chain: DNA-directed RNA polymerase subunit alpha (339 aa).

The alpha N-terminal domain (alpha-NTD) stretch occupies residues 1-235 (MVIQRNWQSL…DQLQLFINFE (235 aa)). The tract at residues 251-339 (FNRNLLRKVD…DLAKRLEEPF (89 aa)) is alpha C-terminal domain (alpha-CTD).

It belongs to the RNA polymerase alpha chain family. As to quaternary structure, homodimer. The RNAP catalytic core consists of 2 alpha, 1 beta, 1 beta' and 1 omega subunit. When a sigma factor is associated with the core the holoenzyme is formed, which can initiate transcription.

The enzyme catalyses RNA(n) + a ribonucleoside 5'-triphosphate = RNA(n+1) + diphosphate. Its function is as follows. DNA-dependent RNA polymerase catalyzes the transcription of DNA into RNA using the four ribonucleoside triphosphates as substrates. The sequence is that of DNA-directed RNA polymerase subunit alpha from Granulibacter bethesdensis (strain ATCC BAA-1260 / CGDNIH1).